The chain runs to 426 residues: MFADFSAAAMELGEVLGLQGLTVPSTKEGDLSLIKRAAAGSFTQAAAASYPSPFLDEQKMLRFAKAAHTLPSGLDFGRENEQRFLLSRTKRPFTPSQWMELEHQALIYKYLNAKAPIPSSLLISISKSFRSSANRMSWRPLYQGFPNADSDPEPGRCRRTDGKKWRCSKEAMADHKYCERHINRNRHRSRKPVENQSRKTVKETPCAGSLPSSVGQGSFKKAKVNEMKPRSISYWTDSLNRTMANKEKGNKAAEENNGPLLNLTNQQPTLSLFSQLKQQNKPEKFNTAGDSESISSNTMLKPWESSNQQNNKSIPFTKMHDRGCLQSVLQNFSLPKDEKMEFQKSKDSNVMTVPSTFYSSPEDPRVSCHAPNMAQMQEDSISSSWEMPQGGPLGEILTNSKNPDDSIMKPEARPYGWLLNLEDHAM.

A QLQ domain is found at 92–127; sequence PFTPSQWMELEHQALIYKYLNAKAPIPSSLLISISK. Residues 151–195 enclose the WRC domain; sequence DPEPGRCRRTDGKKWRCSKEAMADHKYCERHINRNRHRSRKPVEN. 2 short sequence motifs (bipartite nuclear localization signal) span residues 156–166 and 184–191; these read RCRRTDGKKWR and RNRHRSRK. The disordered stretch occupies residues 184-222; it reads RNRHRSRKPVENQSRKTVKETPCAGSLPSSVGQGSFKKA. Basic and acidic residues predominate over residues 191–202; sequence KPVENQSRKTVK.

This sequence belongs to the GRF family.

Its subcellular location is the nucleus. Functionally, transcription activator that plays a regulatory role in gibberellin-induced stem elongation. The protein is Growth-regulating factor 9 (GRF9) of Oryza sativa subsp. japonica (Rice).